Consider the following 99-residue polypeptide: NADH-quinone oxidoreductase subunit K (99 aa).

The next 3 membrane-spanning stretches (helical) occupy residues 3–23 (VTAYVVLSGILFTIGCVGVLI), 28–48 (IVVFMCVELMLNASNLALVAF), and 59–79 (IAAFFVMVVAAAEVVVGLAII).

The protein belongs to the complex I subunit 4L family. In terms of assembly, NDH-1 is composed of 14 different subunits. Subunits NuoA, H, J, K, L, M, N constitute the membrane sector of the complex.

The protein resides in the cell membrane. The enzyme catalyses a quinone + NADH + 5 H(+)(in) = a quinol + NAD(+) + 4 H(+)(out). Functionally, NDH-1 shuttles electrons from NADH, via FMN and iron-sulfur (Fe-S) centers, to quinones in the respiratory chain. The immediate electron acceptor for the enzyme in this species is believed to be a menaquinone. Couples the redox reaction to proton translocation (for every two electrons transferred, four hydrogen ions are translocated across the cytoplasmic membrane), and thus conserves the redox energy in a proton gradient. This Nocardioides sp. (strain ATCC BAA-499 / JS614) protein is NADH-quinone oxidoreductase subunit K.